Here is a 390-residue protein sequence, read N- to C-terminus: Putative cyclin-F2-1 (390 aa).

The segment at 135 to 154 (YNGDDDAPAPDDSMASRPQL) is disordered.

This sequence belongs to the cyclin family. Cyclin F subfamily.

This Oryza sativa subsp. japonica (Rice) protein is Putative cyclin-F2-1 (CycF2-1).